The primary structure comprises 260 residues: Mediator of RNA polymerase II transcription subunit 8 (260 aa).

It belongs to the Mediator complex subunit 8 family. In terms of assembly, component of the Mediator complex.

It localises to the nucleus. Functionally, component of the Mediator complex, a coactivator involved in the regulated transcription of nearly all RNA polymerase II-dependent genes. Mediator functions as a bridge to convey information from gene-specific regulatory proteins to the basal RNA polymerase II transcription machinery. Mediator is recruited to promoters by direct interactions with regulatory proteins and serves as a scaffold for the assembly of a functional preinitiation complex with RNA polymerase II and the general transcription factors. The sequence is that of Mediator of RNA polymerase II transcription subunit 8 (med8) from Emericella nidulans (strain FGSC A4 / ATCC 38163 / CBS 112.46 / NRRL 194 / M139) (Aspergillus nidulans).